Consider the following 115-residue polypeptide: Large ribosomal subunit protein bL19 (115 aa).

Belongs to the bacterial ribosomal protein bL19 family.

This protein is located at the 30S-50S ribosomal subunit interface and may play a role in the structure and function of the aminoacyl-tRNA binding site. The protein is Large ribosomal subunit protein bL19 of Edwardsiella ictaluri (strain 93-146).